An 868-amino-acid chain; its full sequence is Leucine--tRNA ligase (868 aa).

The short motif at proline 42–histidine 52 is the 'HIGH' region element. Positions lysine 627–serine 631 match the 'KMSKS' region motif. Lysine 630 contacts ATP.

Belongs to the class-I aminoacyl-tRNA synthetase family.

The protein resides in the cytoplasm. It catalyses the reaction tRNA(Leu) + L-leucine + ATP = L-leucyl-tRNA(Leu) + AMP + diphosphate. The polypeptide is Leucine--tRNA ligase (Pseudomonas putida (strain ATCC 700007 / DSM 6899 / JCM 31910 / BCRC 17059 / LMG 24140 / F1)).